The chain runs to 406 residues: MEGMRRPTPTVYVGRVPIGGAHPIAVQSMTNTPTRDVEATTAQVLELHRAGSEIVRLTVNDEEAAKAVPEIKRRLLAEGAEVPLVGDFHFNGHLLLRKYPKMAEALDKFRINPGTLGRGRHKDEHFAEMIRIAMDLGKPVRIGANWGSLDPALLTELMDRNARRPEPKSAHEVVLEALVESAVRAYEAALEMGLGEDKLVLSAKVSKARDLVWVYRELARRTQAPLHLGLTEAGMGVKGIVASAAALAPLLLEGIGDTIRVSLTPAPGEPRTKEVEVAQEILQALGLRAFAPEVTSCPGCGRTTSTFFQELAEEVSRRLKERLPEWRARYPGVEELKVAVMGCVVNGPGESKHAHIGISLPGAGEEPKAPVYADGKLLTILKGEGIAEEFLRLVEDYVKTRFAPKA.

4 residues coordinate [4Fe-4S] cluster: C297, C300, C343, and E350.

It belongs to the IspG family. The cofactor is [4Fe-4S] cluster.

It carries out the reaction (2E)-4-hydroxy-3-methylbut-2-enyl diphosphate + oxidized [flavodoxin] + H2O + 2 H(+) = 2-C-methyl-D-erythritol 2,4-cyclic diphosphate + reduced [flavodoxin]. Its pathway is isoprenoid biosynthesis; isopentenyl diphosphate biosynthesis via DXP pathway; isopentenyl diphosphate from 1-deoxy-D-xylulose 5-phosphate: step 5/6. Converts 2C-methyl-D-erythritol 2,4-cyclodiphosphate (ME-2,4cPP) into 1-hydroxy-2-methyl-2-(E)-butenyl 4-diphosphate. The polypeptide is 4-hydroxy-3-methylbut-2-en-1-yl diphosphate synthase (flavodoxin) (Thermus thermophilus (strain ATCC 27634 / DSM 579 / HB8)).